Consider the following 374-residue polypeptide: P2Y purinoceptor 11 (374 aa).

At 1–29 (MAANVSGAKSCPANFLAAADDKLSGFQGD) the chain is on the extracellular side. N-linked (GlcNAc...) asparagine glycosylation occurs at N4. The chain crosses the membrane as a helical span at residues 30–50 (FLWPILVVEFLVAVASNGLAL). The Cytoplasmic segment spans residues 51–64 (YRFSIRKQRPWHPA). Residues 65–85 (VVFSVQLAVSDLLCALTLPPL) traverse the membrane as a helical segment. The Extracellular segment spans residues 86–116 (AAYLYPPKHWRYGEAACRLERFLFTCNLLGS). Residues C102 and C180 are joined by a disulfide bond. The chain crosses the membrane as a helical span at residues 117–137 (VIFITCISLNRYLGIVHPFFA). The Cytoplasmic segment spans residues 138–146 (RSHLRPKHA). A helical membrane pass occupies residues 147 to 167 (WAVSAAGWVLAALLAMPTLSF). Residues 168–206 (SHLKRPQQGAGNCSVARPEACIKCLGTADHGLAAYRAYS) lie on the Extracellular side of the membrane. N-linked (GlcNAc...) asparagine glycosylation occurs at N179. A helical transmembrane segment spans residues 207-227 (LVLAGLGCGLPLLLTLAAYGA). The Cytoplasmic portion of the chain corresponds to 228–245 (LGRAVLRSPGMTVAEKLR). Residues 246–266 (VAALVASGVALYASSYVPYHI) form a helical membrane-spanning segment. The Extracellular portion of the chain corresponds to 267-308 (MRVLNVDARRRWSTRCPSFADIAQATAALELGPYVGYQVMRG). The helical transmembrane segment at 309-329 (LMPLAFCVHPLLYMAAVPSLG) threads the bilayer. The Cytoplasmic segment spans residues 330 to 374 (CCCRHCPGYRDSWNPEDAKSTGQALPLNATAAPKPSEPQSRELSQ). Residues 345-374 (EDAKSTGQALPLNATAAPKPSEPQSRELSQ) are disordered.

It belongs to the G-protein coupled receptor 1 family. As to expression, highest expression in liver and spleen.

Its subcellular location is the cell membrane. Functionally, receptor for ATP and ADP coupled to G-proteins that activate both phosphatidylinositol-calcium and adenylyl cyclase second messenger systems. Not activated by UTP or UDP. The sequence is that of P2Y purinoceptor 11 (P2RY11) from Homo sapiens (Human).